Consider the following 210-residue polypeptide: Germin-like protein subfamily 3 member 4 (210 aa).

The signal sequence occupies residues 1-18 (MKFFVVIVFCAIFLSVSG). A disulfide bridge connects residues C27 and C44. The Cupin type-1 domain occupies 58 to 190 (TKLTEAGDTD…VFGIDQEHIK (133 aa)). The N-linked (GlcNAc...) asparagine glycan is linked to N73. Residues H106, H108, E113, and H152 each coordinate Mn(2+).

This sequence belongs to the germin family. As to quaternary structure, oligomer (believed to be a pentamer but probably hexamer).

It is found in the secreted. It localises to the extracellular space. Its subcellular location is the apoplast. Its function is as follows. May play a role in plant defense. Probably has no oxalate oxidase activity even if the active site is conserved. The polypeptide is Germin-like protein subfamily 3 member 4 (Arabidopsis thaliana (Mouse-ear cress)).